The chain runs to 86 residues: Small ribosomal subunit protein bS20 (86 aa).

The segment at 1–26 (MANIKSAKKRALQSEKSRKHNASRRT) is disordered.

It belongs to the bacterial ribosomal protein bS20 family.

Binds directly to 16S ribosomal RNA. This is Small ribosomal subunit protein bS20 from Psychromonas ingrahamii (strain DSM 17664 / CCUG 51855 / 37).